Here is a 242-residue protein sequence, read N- to C-terminus: 1-(5-phosphoribosyl)-5-[(5-phosphoribosylamino)methylideneamino] imidazole-4-carboxamide isomerase (242 aa).

The active-site Proton acceptor is Asp-8. The active-site Proton donor is the Asp-129.

The protein belongs to the HisA/HisF family.

It localises to the cytoplasm. The enzyme catalyses 1-(5-phospho-beta-D-ribosyl)-5-[(5-phospho-beta-D-ribosylamino)methylideneamino]imidazole-4-carboxamide = 5-[(5-phospho-1-deoxy-D-ribulos-1-ylimino)methylamino]-1-(5-phospho-beta-D-ribosyl)imidazole-4-carboxamide. The protein operates within amino-acid biosynthesis; L-histidine biosynthesis; L-histidine from 5-phospho-alpha-D-ribose 1-diphosphate: step 4/9. The polypeptide is 1-(5-phosphoribosyl)-5-[(5-phosphoribosylamino)methylideneamino] imidazole-4-carboxamide isomerase (Syntrophus aciditrophicus (strain SB)).